A 171-amino-acid polypeptide reads, in one-letter code: Ribosome maturation factor RimM (171 aa).

Residues 97 to 170 (EGEYYYHEII…LVTIHVMEGL (74 aa)) enclose the PRC barrel domain.

Belongs to the RimM family. In terms of assembly, binds ribosomal protein uS19.

It localises to the cytoplasm. An accessory protein needed during the final step in the assembly of 30S ribosomal subunit, possibly for assembly of the head region. Essential for efficient processing of 16S rRNA. May be needed both before and after RbfA during the maturation of 16S rRNA. It has affinity for free ribosomal 30S subunits but not for 70S ribosomes. In Bacillus cereus (strain ATCC 14579 / DSM 31 / CCUG 7414 / JCM 2152 / NBRC 15305 / NCIMB 9373 / NCTC 2599 / NRRL B-3711), this protein is Ribosome maturation factor RimM.